The following is a 412-amino-acid chain: Putative competence-damage inducible protein (412 aa).

It belongs to the CinA family.

This Bacillus cereus (strain AH820) protein is Putative competence-damage inducible protein.